The chain runs to 292 residues: ATP synthase gamma chain (292 aa).

The protein belongs to the ATPase gamma chain family. In terms of assembly, F-type ATPases have 2 components, CF(1) - the catalytic core - and CF(0) - the membrane proton channel. CF(1) has five subunits: alpha(3), beta(3), gamma(1), delta(1), epsilon(1). CF(0) has three main subunits: a, b and c.

Its subcellular location is the cell inner membrane. Its function is as follows. Produces ATP from ADP in the presence of a proton gradient across the membrane. The gamma chain is believed to be important in regulating ATPase activity and the flow of protons through the CF(0) complex. This chain is ATP synthase gamma chain, found in Syntrophobacter fumaroxidans (strain DSM 10017 / MPOB).